The chain runs to 252 residues: Protein BTG3 (252 aa).

The disordered stretch occupies residues 138-162 (VTSDYHSGSSSSDEDTSKEVEVKPS).

It belongs to the BTG family. In terms of tissue distribution, highly expressed in the brain.

In terms of biological role, overexpression impairs serum-induced cell cycle progression from the G0/G1 to S phase. The protein is Protein BTG3 of Rattus norvegicus (Rat).